The following is a 218-amino-acid chain: Outer-membrane lipoprotein LolB (218 aa).

A signal peptide spans 1–20 (MSQVIRTLALTGLALAGLSG). The N-palmitoyl cysteine moiety is linked to residue Cys-21. Residue Cys-21 is the site of S-diacylglycerol cysteine attachment.

This sequence belongs to the LolB family. Monomer.

Its subcellular location is the cell outer membrane. In terms of biological role, plays a critical role in the incorporation of lipoproteins in the outer membrane after they are released by the LolA protein. In Xanthomonas campestris pv. campestris (strain B100), this protein is Outer-membrane lipoprotein LolB.